Here is a 231-residue protein sequence, read N- to C-terminus: 5'-methylthioadenosine/S-adenosylhomocysteine nucleosidase (231 aa).

Residue glutamate 12 is the Proton acceptor of the active site. Residues glycine 78, isoleucine 153, and methionine 174–glutamate 175 each bind substrate. Aspartate 198 serves as the catalytic Proton donor.

Belongs to the PNP/UDP phosphorylase family. MtnN subfamily.

The enzyme catalyses S-adenosyl-L-homocysteine + H2O = S-(5-deoxy-D-ribos-5-yl)-L-homocysteine + adenine. It carries out the reaction S-methyl-5'-thioadenosine + H2O = 5-(methylsulfanyl)-D-ribose + adenine. The catalysed reaction is 5'-deoxyadenosine + H2O = 5-deoxy-D-ribose + adenine. Its pathway is amino-acid biosynthesis; L-methionine biosynthesis via salvage pathway; S-methyl-5-thio-alpha-D-ribose 1-phosphate from S-methyl-5'-thioadenosine (hydrolase route): step 1/2. Functionally, catalyzes the irreversible cleavage of the glycosidic bond in both 5'-methylthioadenosine (MTA) and S-adenosylhomocysteine (SAH/AdoHcy) to adenine and the corresponding thioribose, 5'-methylthioribose and S-ribosylhomocysteine, respectively. Also cleaves 5'-deoxyadenosine, a toxic by-product of radical S-adenosylmethionine (SAM) enzymes, into 5-deoxyribose and adenine. This Maridesulfovibrio salexigens (strain ATCC 14822 / DSM 2638 / NCIMB 8403 / VKM B-1763) (Desulfovibrio salexigens) protein is 5'-methylthioadenosine/S-adenosylhomocysteine nucleosidase.